Here is a 235-residue protein sequence, read N- to C-terminus: MTELARLKFYATQPHSCSYLPDEQATTLFLDPSQPMDVHVYADLSEMGFRRSGDHLYRPHCQNCNACVPARIPAARFIPNRQQRRILKRNADLTVTAARPAFKEEYFDLYRRYIETRHADGDMYPPSRDQFSTFLVRDLPFCWFYEFRLAGRLLAVAVCDLLPNGLSAVYTFYEPDEERRSLGRFAILWQITEALRQDLEAVYLGYWIKNCKKMNYKTQYRPIELLINQRWVTLN.

The protein belongs to the R-transferase family. Bpt subfamily.

The protein resides in the cytoplasm. It catalyses the reaction N-terminal L-glutamyl-[protein] + L-leucyl-tRNA(Leu) = N-terminal L-leucyl-L-glutamyl-[protein] + tRNA(Leu) + H(+). The catalysed reaction is N-terminal L-aspartyl-[protein] + L-leucyl-tRNA(Leu) = N-terminal L-leucyl-L-aspartyl-[protein] + tRNA(Leu) + H(+). Functionally, functions in the N-end rule pathway of protein degradation where it conjugates Leu from its aminoacyl-tRNA to the N-termini of proteins containing an N-terminal aspartate or glutamate. The sequence is that of Aspartate/glutamate leucyltransferase from Pseudomonas putida (strain W619).